Consider the following 889-residue polypeptide: Mixed-linked glucan synthase 2 (889 aa).

The disordered stretch occupies residues 34–53; the sequence is AGADGQNGRRSPVAKRVNDG. Helical transmembrane passes span 93–113 and 123–143; these read ILHP…AFFA and GVWL…SWVL. The active site involves aspartate 213. The stretch at 265–293 forms a coiled coil; the sequence is ELMSDHRRVRREYEEFKVRIDSLSSTIRQ. 2 residues coordinate substrate: aspartate 411 and aspartate 413. Aspartate 579 is an active-site residue. 6 helical membrane-spanning segments follow: residues 655–675, 685–705, 723–743, 777–797, 811–831, and 842–862; these read TYPI…MWLI, FGEY…IGMF, FYMI…ALKL, LLIP…VAVG, LAVL…PFAL, and AVLF…YVAF.

It belongs to the glycosyltransferase 2 family. Plant cellulose synthase-like F subfamily.

The protein resides in the golgi apparatus membrane. Catalyzes both beta-1,3 and beta-1,4 glycosidic linkage on beta-D-glucan. Essential for (1,3;1,4)-beta-D-glucans synthesis in grasses and cereals (Poaceae). The mixed-linked glucans (which are not present in walls of dicotyledons or most other monocotyledonous plants) are particularly important constituents of the walls of the starchy endosperm and aleurone cells of cereal grains such as oats, wheat, rice and barley. They can account for up to 70% by weight of the wall. In Oryza sativa subsp. japonica (Rice), this protein is Mixed-linked glucan synthase 2 (CSLF2).